The following is a 235-amino-acid chain: MGQKINPIGLRLGINRTWDSRWFAGKNEYGKLLHEDVKIREILHKELKQAAVARIVIERPHKKCRVTIHSARPGVVIGKKGADIDKLRKKVADITSSDVVINIVEIRKPELDATLVAESIAQQLERRVAFRRAMKRAVQSAMRLGAEGIRINCSGRLGGAEIARMEWYREGRVPLHTLRADIDYGVATAFTTFGTCGVKVWIFKGEILEHDPMAQDKRMAESDGGGSSRPRRDAA.

The KH type-2 domain occupies 39–107 (IREILHKELK…DVVINIVEIR (69 aa)). Residues 215–235 (QDKRMAESDGGGSSRPRRDAA) form a disordered region.

It belongs to the universal ribosomal protein uS3 family. As to quaternary structure, part of the 30S ribosomal subunit. Forms a tight complex with proteins S10 and S14.

Its function is as follows. Binds the lower part of the 30S subunit head. Binds mRNA in the 70S ribosome, positioning it for translation. The sequence is that of Small ribosomal subunit protein uS3 from Rhodopseudomonas palustris (strain TIE-1).